The sequence spans 863 residues: Chromatin assembly factor 1 subunit A (863 aa).

4 disordered regions span residues 1–353 (MVVV…EEKD), 423–466 (LNGL…PDRS), 513–579 (DSDE…RQRM), and 749–863 (VTRD…PATA). Basic and acidic residues predominate over residues 42–54 (LNPEPKECNEPKR). A Phosphothreonine modification is found at T111. At S118 the chain carries Phosphoserine. Residues 144 to 154 (SEGTTEPTIPL) show a composition bias toward low complexity. Acidic residues-rich tracts occupy residues 155–168 (TEEETEKDEAEDVD) and 177–196 (QDSDTEEEEEEEEEEEEQQQ). Over residues 205–237 (ESVLSTGSTSSASVIASSPEPSKSAPTTPASTS) the composition is skewed to low complexity. 2 stretches are compositionally biased toward basic and acidic residues: residues 254-353 (QEQE…EEKD) and 457-466 (QKADDGPDRS). Composition is skewed to acidic residues over residues 513-524 (DSDEEWEEEEPG) and 532-547 (GDDDDEAGEDDDDDDG). Residues 569 to 579 (DPEKQKVRQRM) show a composition bias toward basic and acidic residues. Residues 760 to 771 (NSPTTNSSTTPS) show a composition bias toward low complexity. Positions 806–815 (DTEDDEDDDC) are enriched in acidic residues. Over residues 821-835 (QSGSSEQDINTSLPQ) the composition is skewed to polar residues. The segment covering 850 to 863 (TAALALPCPTPATA) has biased composition (low complexity).

This sequence belongs to the CHAF1A family.

Its subcellular location is the nucleus. Its function is as follows. Acts as a component of the histone chaperone complex chromatin assembly factor 1 (CAF-1), which assembles histone octamers onto DNA during replication and repair. CAF-1 performs the first step of the nucleosome assembly process, bringing newly synthesized histones H3 and H4 to replicating DNA; histones H2A/H2B can bind to this chromatin precursor subsequent to DNA replication to complete the histone octamer. In Danio rerio (Zebrafish), this protein is Chromatin assembly factor 1 subunit A (chaf1a).